The following is a 304-amino-acid chain: Glutaminase (304 aa).

Ser-63, Asn-114, Glu-158, Asn-165, Tyr-189, Tyr-240, and Val-258 together coordinate substrate.

The protein belongs to the glutaminase family. In terms of assembly, homotetramer.

It carries out the reaction L-glutamine + H2O = L-glutamate + NH4(+). The polypeptide is Glutaminase (Shewanella putrefaciens (strain CN-32 / ATCC BAA-453)).